Here is a 260-residue protein sequence, read N- to C-terminus: uncharacterized protein (260 aa).

Positions 1-38 (MNWTREIEQYKQVVASYKLKMKRMEMKISDISEEKRQS) form a coiled coil.

This is an uncharacterized protein from Caenorhabditis elegans.